A 466-amino-acid chain; its full sequence is Histidinol dehydrogenase, chloroplastic (466 aa).

Residues 1-30 constitute a chloroplast transit peptide; sequence MSLNLSRLSLLSSPRISISTHAPRKGYVCC. NAD(+) is bound by residues Tyr155, Gln217, and Asn240. Residues Ser266, Gln288, and His291 each contribute to the substrate site. Gln288 and His291 together coordinate Zn(2+). Active-site proton acceptor residues include Glu356 and His357. 4 residues coordinate substrate: His357, Asp390, Glu444, and His449. Asp390 contributes to the Zn(2+) binding site. His449 contributes to the Zn(2+) binding site.

Belongs to the histidinol dehydrogenase family. It depends on Zn(2+) as a cofactor.

It localises to the plastid. It is found in the chloroplast. It catalyses the reaction L-histidinol + 2 NAD(+) + H2O = L-histidine + 2 NADH + 3 H(+). Its pathway is amino-acid biosynthesis; L-histidine biosynthesis; L-histidine from 5-phospho-alpha-D-ribose 1-diphosphate: step 9/9. In terms of biological role, catalyzes the sequential NAD-dependent oxidations of L-histidinol to L-histidinaldehyde and then to L-histidine. This chain is Histidinol dehydrogenase, chloroplastic (HISN8), found in Arabidopsis thaliana (Mouse-ear cress).